The chain runs to 426 residues: D-tagatose-1,6-bisphosphate aldolase subunit KbaZ (426 aa).

It belongs to the GatZ/KbaZ family. KbaZ subfamily. Forms a complex with KbaY.

It functions in the pathway carbohydrate metabolism; D-tagatose 6-phosphate degradation; D-glyceraldehyde 3-phosphate and glycerone phosphate from D-tagatose 6-phosphate: step 2/2. Functionally, component of the tagatose-1,6-bisphosphate aldolase KbaYZ that is required for full activity and stability of the Y subunit. Could have a chaperone-like function for the proper and stable folding of KbaY. When expressed alone, KbaZ does not show any aldolase activity. This chain is D-tagatose-1,6-bisphosphate aldolase subunit KbaZ, found in Escherichia coli (strain ATCC 8739 / DSM 1576 / NBRC 3972 / NCIMB 8545 / WDCM 00012 / Crooks).